The sequence spans 191 residues: Ribonuclease HII (191 aa).

The RNase H type-2 domain occupies 4-191 (YTAAGLDEVG…HRKTFLSKIQ (188 aa)). 3 residues coordinate a divalent metal cation: Asp10, Glu11, and Asp106.

The protein belongs to the RNase HII family. Mn(2+) is required as a cofactor. Requires Mg(2+) as cofactor.

The protein resides in the cytoplasm. The enzyme catalyses Endonucleolytic cleavage to 5'-phosphomonoester.. In terms of biological role, endonuclease that specifically degrades the RNA of RNA-DNA hybrids. In Prochlorococcus marinus (strain SARG / CCMP1375 / SS120), this protein is Ribonuclease HII.